The following is a 408-amino-acid chain: Imidazolonepropionase (408 aa).

Residues His-73 and His-75 each coordinate Fe(3+). Zn(2+) is bound by residues His-73 and His-75. The 4-imidazolone-5-propanoate site is built by Arg-82, Tyr-145, and His-178. Tyr-145 is an N-formimidoyl-L-glutamate binding site. His-243 lines the Fe(3+) pocket. Position 243 (His-243) interacts with Zn(2+). Residue Gln-246 coordinates 4-imidazolone-5-propanoate. Asp-318 provides a ligand contact to Fe(3+). Residue Asp-318 participates in Zn(2+) binding. N-formimidoyl-L-glutamate is bound by residues Asn-320 and Gly-322. Ser-323 contacts 4-imidazolone-5-propanoate.

The protein belongs to the metallo-dependent hydrolases superfamily. HutI family. The cofactor is Zn(2+). Fe(3+) is required as a cofactor.

The protein resides in the cytoplasm. It catalyses the reaction 4-imidazolone-5-propanoate + H2O = N-formimidoyl-L-glutamate. The protein operates within amino-acid degradation; L-histidine degradation into L-glutamate; N-formimidoyl-L-glutamate from L-histidine: step 3/3. Catalyzes the hydrolytic cleavage of the carbon-nitrogen bond in imidazolone-5-propanoate to yield N-formimidoyl-L-glutamate. It is the third step in the universal histidine degradation pathway. The chain is Imidazolonepropionase from Shewanella baltica (strain OS185).